The chain runs to 79 residues: Serine protease inhibitor Kazal-type 1 (79 aa).

A signal peptide spans 1-23; that stretch reads MKVTGIFLLSALALLSLSGNTGA. Residues 26-79 enclose the Kazal-like domain; it reads LGREAKCYNELNGCTKIYDPVCGTDGNTYPNECVLCFENRKRQTSILIQKSGPC. 3 disulfides stabilise this stretch: cysteine 32-cysteine 61, cysteine 39-cysteine 58, and cysteine 47-cysteine 79.

It localises to the secreted. Serine protease inhibitor which exhibits anti-trypsin activity. In the pancreas, protects against trypsin-catalyzed premature activation of zymogens. Functionally, in the male reproductive tract, binds to sperm heads where it modulates sperm capacitance by inhibiting calcium uptake and nitrogen oxide (NO) production. The protein is Serine protease inhibitor Kazal-type 1 (SPINK1) of Homo sapiens (Human).